A 254-amino-acid polypeptide reads, in one-letter code: MGRGRVELKRIENKINRQVTFAKRRNGLLKKAYELSVLCDAEVALIIFSNRGKLYEFCSSSSMIRTLERYQKCNYGPPEPNVPSREALAVELSSQQEYLKLKERYDALQRTQRNLLGEDLGPLSTKELELLERQLDSSLKQIRALRTQFMLDQLNDLQSKERMLNETNKTLRLRLADGYQMPLQLNPNQEDHHVDYGRHDQQQQQNSHHAFFQPLECEPILQMGYQGQQDHGMEAGPSENNYMLGWLPYDTNSI.

In terms of domain architecture, MADS-box spans 3 to 57; sequence RGRVELKRIENKINRQVTFAKRRNGLLKKAYELSVLCDAEVALIIFSNRGKLYEF. The region spanning 91–181 is the K-box domain; that stretch reads ELSSQQEYLK…RLRLADGYQM (91 aa).

It localises to the nucleus. Functionally, probable transcription factor active in inflorescence development and floral organogenesis. The chain is Agamous-like MADS-box protein AGL9 homolog (AGL9) from Sinapis alba (White mustard).